An 846-amino-acid chain; its full sequence is Iron-sulfur cluster assembly SufBD family protein Mb1496 (846 aa).

Residues 1-20 (MTLTPEASKSVAQPPTQAPL) are disordered. Residues 388-528 (LAGYYLAEGH…LQSILARLGH (141 aa)) form the DOD-type homing endonuclease domain.

This sequence belongs to the iron-sulfur cluster assembly SufBD family. Post-translationally, this protein undergoes a protein self splicing that involves a post-translational excision of the intervening region (intein) followed by peptide ligation.

The protein is Iron-sulfur cluster assembly SufBD family protein Mb1496 of Mycobacterium bovis (strain ATCC BAA-935 / AF2122/97).